The sequence spans 203 residues: dTTP/UTP pyrophosphatase (203 aa).

The active-site Proton acceptor is Asp-74.

The protein belongs to the Maf family. YhdE subfamily. A divalent metal cation is required as a cofactor.

It localises to the cytoplasm. The enzyme catalyses dTTP + H2O = dTMP + diphosphate + H(+). It carries out the reaction UTP + H2O = UMP + diphosphate + H(+). Nucleoside triphosphate pyrophosphatase that hydrolyzes dTTP and UTP. May have a dual role in cell division arrest and in preventing the incorporation of modified nucleotides into cellular nucleic acids. The protein is dTTP/UTP pyrophosphatase of Treponema denticola (strain ATCC 35405 / DSM 14222 / CIP 103919 / JCM 8153 / KCTC 15104).